The chain runs to 260 residues: Putative ATP-binding protein BAB2_1147 (260 aa).

The ABC transporter domain maps to 5–228 (ISFNNVVMRY…DLPYPRTEAI (224 aa)). 37 to 44 (GPSGCGKS) contacts ATP.

The protein belongs to the ABC transporter superfamily. In terms of assembly, the complex is composed of two ATP-binding proteins (BAB2_1147), two transmembrane proteins (BAB2_1148) and a solute-binding protein (BAB2_1146).

The protein resides in the cell inner membrane. In terms of biological role, probably part of an ABC transporter complex. Probably Responsible for energy coupling to the transport system. The sequence is that of Putative ATP-binding protein BAB2_1147 from Brucella abortus (strain 2308).